Consider the following 118-residue polypeptide: MQWYLSVLKNYVGFSGRARRKEYWMFTLINAIVGAIINVIQLILGLELPYLSMLYLLATFLPVLALAIRRLHDTDRSGAWALLFFVPFIGWLVLLVFFCTEGTSGSNRYGNDPKFGSN.

Residues 1 to 25 (MQWYLSVLKNYVGFSGRARRKEYWM) are Periplasmic-facing. Residues 26–46 (FTLINAIVGAIINVIQLILGL) traverse the membrane as a helical segment. Glu47 is a topological domain (cytoplasmic). Residues 48–68 (LPYLSMLYLLATFLPVLALAI) traverse the membrane as a helical segment. Residues 69–77 (RRLHDTDRS) lie on the Periplasmic side of the membrane. The helical transmembrane segment at 78 to 98 (GAWALLFFVPFIGWLVLLVFF) threads the bilayer. Topologically, residues 99–118 (CTEGTSGSNRYGNDPKFGSN) are cytoplasmic.

The protein to E.coli YhaH.

The protein localises to the cell inner membrane. The sequence is that of Inner membrane protein YhaI (yhaI) from Escherichia coli O157:H7.